The primary structure comprises 142 residues: Nucleoside diphosphate kinase (142 aa).

ATP contacts are provided by Lys11, Phe59, Arg87, Thr93, Arg104, and Asn114. His117 (pros-phosphohistidine intermediate) is an active-site residue.

This sequence belongs to the NDK family. Homotetramer. Mg(2+) serves as cofactor.

It is found in the cytoplasm. It carries out the reaction a 2'-deoxyribonucleoside 5'-diphosphate + ATP = a 2'-deoxyribonucleoside 5'-triphosphate + ADP. It catalyses the reaction a ribonucleoside 5'-diphosphate + ATP = a ribonucleoside 5'-triphosphate + ADP. Major role in the synthesis of nucleoside triphosphates other than ATP. The ATP gamma phosphate is transferred to the NDP beta phosphate via a ping-pong mechanism, using a phosphorylated active-site intermediate. The protein is Nucleoside diphosphate kinase of Dechloromonas aromatica (strain RCB).